We begin with the raw amino-acid sequence, 163 residues long: Protein FAM167B (163 aa).

Positions Phe73–Glu132 form a coiled coil.

This sequence belongs to the FAM167 (SEC) family.

In Homo sapiens (Human), this protein is Protein FAM167B (FAM167B).